Reading from the N-terminus, the 333-residue chain is MSNDTQPKIAIIGYGSQGRAHALNLRDSGFDVTVGLRPGGPTESKAQADGFTVVAPSEAVKSADLVAILTPDMVQKKLYEDVIAPNMKQGACLLFAHGLNVHFDMITPRADLDVVLVAPKGPGALVRREYEIGRGVPCIYAVYQDTSGKAEQFALTYAGGLGGARANIIKTTFKEETETDLFGEQAVLCGGASSLVQAGFEVLVEAGYQPEIAYYEVLHELKLIVDLFYEGGITRMLEFVSETAQYGDYVSGPRVIDASTKARMKDVLTDIQNGTFTKNWVAEYEAGLPNYTKFKQADLEHPIEEVGKKLRAKMVWLNGEQQAAAAPANQQAA.

Residues 1-171 (MSNDTQPKIA…GGARANIIKT (171 aa)) form the KARI N-terminal Rossmann domain. Residues 14 to 17 (YGSQ), Arg37, Thr42, and 72 to 75 (DMVQ) contribute to the NADP(+) site. His97 is a catalytic residue. Gly123 is an NADP(+) binding site. Residues 172 to 317 (TFKEETETDL…KKLRAKMVWL (146 aa)) form the KARI C-terminal knotted domain. Residues Asp180, Glu184, Glu216, and Glu220 each contribute to the Mg(2+) site. Residue Ser241 coordinates substrate.

The protein belongs to the ketol-acid reductoisomerase family. Requires Mg(2+) as cofactor.

The catalysed reaction is (2R)-2,3-dihydroxy-3-methylbutanoate + NADP(+) = (2S)-2-acetolactate + NADPH + H(+). It catalyses the reaction (2R,3R)-2,3-dihydroxy-3-methylpentanoate + NADP(+) = (S)-2-ethyl-2-hydroxy-3-oxobutanoate + NADPH + H(+). Its pathway is amino-acid biosynthesis; L-isoleucine biosynthesis; L-isoleucine from 2-oxobutanoate: step 2/4. The protein operates within amino-acid biosynthesis; L-valine biosynthesis; L-valine from pyruvate: step 2/4. Involved in the biosynthesis of branched-chain amino acids (BCAA). Catalyzes an alkyl-migration followed by a ketol-acid reduction of (S)-2-acetolactate (S2AL) to yield (R)-2,3-dihydroxy-isovalerate. In the isomerase reaction, S2AL is rearranged via a Mg-dependent methyl migration to produce 3-hydroxy-3-methyl-2-ketobutyrate (HMKB). In the reductase reaction, this 2-ketoacid undergoes a metal-dependent reduction by NADPH to yield (R)-2,3-dihydroxy-isovalerate. The protein is Ketol-acid reductoisomerase (NADP(+)) of Xanthomonas oryzae pv. oryzae (strain MAFF 311018).